Here is a 331-residue protein sequence, read N- to C-terminus: MASTPKANVPKIDVSPLFGDNMEEKMKVARAIDAASRDTGFFYAVNHGVDVKRLSNKTREFHFSITDEEKWDLAIRAYNKEHQDQIRAGYYLSIPEKKAVESFCYLNPNFKPDHPLIQSKTPTHEVNVWPDEKKHPGFREFAEQYYWDVFGLSSALLRGYALALGKEEDFFSRHFKKEDALSSVVLIRYPYLNPYPPAAIKTAEDGTKLSFEWHEDVSLITVLYQSDVANLQVEMPQGYLDIEADDNAYLVNCGSYMAHITNNYYPAPIHRVKWVNEERQSLPFFVNLGFNDTVQPWDPSKEDGKTDQRPISYGDYLQNGLVSLINKNGQT.

Isopenicillin N contacts are provided by R87, Y91, S183, and Y189. N-[(5S)-5-amino-5-carboxypentanoyl]-L-cysteinyl-D-valine is bound by residues R87, Y91, S183, Y189, H214, and D216. Residues 181–288 (LSSVVLIRYP…RQSLPFFVNL (108 aa)) form the Fe2OG dioxygenase domain. The Fe(2+) site is built by H214, D216, and H270. R279 contributes to the 2-oxoglutarate binding site. S281 contributes to the isopenicillin N binding site. S281 contacts N-[(5S)-5-amino-5-carboxypentanoyl]-L-cysteinyl-D-valine.

This sequence belongs to the iron/ascorbate-dependent oxidoreductase family. It depends on Fe(2+) as a cofactor.

It localises to the cytoplasm. Its subcellular location is the cytosol. It catalyses the reaction N-[(5S)-5-amino-5-carboxypentanoyl]-L-cysteinyl-D-valine + O2 = isopenicillin N + 2 H2O. The protein operates within antibiotic biosynthesis; penicillin G biosynthesis; penicillin G from L-alpha-aminoadipate and L-cysteine and L-valine: step 2/3. In terms of biological role, isopenicillin N synthase; part of the gene cluster that mediates the biosynthesis of penicillin, the world's most important antibiotic. The first step of the pathway is performed by the trimodular NRPS acvA that produces the tripeptide N-[(5S)-5-amino-5-carboxypentanoyl]-L-cysteinyl-D-valine (LLD-ACV or ACV) via condensation of the 3 residues L-2-aminoadipate, L-cysteine and L-valine. The precursor amino acids for penicillin biosynthesis are withdrawn from the vacuolar amino acid pool by the MFS-type transporter penV. Each of the constituent amino acids of the tripeptide acv are activated as aminoacyl-adenylates with peptide bonds formed through the participation of amino acid thioester intermediates. The tripeptide ACV is then cyclized to form isopenicillin N (IPN) by the isopenicillin N synthase ipnA that forms the beta-lactam nucleus. Finally, the alpha-aminoadipyl side chain is exchanged for phenylacetic acid by the isopenicillin N acyltransferase aatA to yield penicillin. This step occurs in the peroxisomal matrix and the penM and paaT transporters are involved in the isopenicillin N and phenylacetic acid import into the peroxisome, respectively. In Penicillium rubens (strain ATCC 28089 / DSM 1075 / NRRL 1951 / Wisconsin 54-1255) (Penicillium chrysogenum), this protein is Isopenicillin N synthase.